The primary structure comprises 206 residues: Dual specificity phosphatase 29 (206 aa).

The Tyrosine-protein phosphatase domain occupies 47 to 194 (HVNQVWPSVY…LRALDITLQE (148 aa)). 138 to 145 (HCVMGRSR) is a substrate binding site. Cys139 (phosphocysteine intermediate) is an active-site residue.

Belongs to the protein-tyrosine phosphatase family. Non-receptor class dual specificity subfamily.

It localises to the cytoplasm. It is found in the nucleus. It catalyses the reaction O-phospho-L-tyrosyl-[protein] + H2O = L-tyrosyl-[protein] + phosphate. The enzyme catalyses O-phospho-L-seryl-[protein] + H2O = L-seryl-[protein] + phosphate. The catalysed reaction is O-phospho-L-threonyl-[protein] + H2O = L-threonyl-[protein] + phosphate. Its function is as follows. Dual specificity phosphatase able to dephosphorylate phosphotyrosine, phosphoserine and phosphothreonine residues within the same substrate, with a preference for phosphotyrosine as a substrate. Involved in the modulation of AMPK and MAPK1/2 signaling pathways. This chain is Dual specificity phosphatase 29 (dusp29), found in Gasterosteus aculeatus (Three-spined stickleback).